A 968-amino-acid chain; its full sequence is RNA polymerase-associated protein RapA (968 aa).

Residues 164–334 (DVGRRHAPRV…FARLRLLDPN (171 aa)) form the Helicase ATP-binding domain. 177–184 (DEVGLGKT) is a binding site for ATP. A DEAH box motif is present at residues 280-283 (DEAH). Positions 490–662 (RVEWLMGYLT…YLASPDQTEG (173 aa)) constitute a Helicase C-terminal domain.

Belongs to the SNF2/RAD54 helicase family. RapA subfamily. As to quaternary structure, interacts with the RNAP. Has a higher affinity for the core RNAP than for the holoenzyme. Its ATPase activity is stimulated by binding to RNAP.

Its function is as follows. Transcription regulator that activates transcription by stimulating RNA polymerase (RNAP) recycling in case of stress conditions such as supercoiled DNA or high salt concentrations. Probably acts by releasing the RNAP, when it is trapped or immobilized on tightly supercoiled DNA. Does not activate transcription on linear DNA. Probably not involved in DNA repair. The protein is RNA polymerase-associated protein RapA of Shigella dysenteriae serotype 1 (strain Sd197).